The primary structure comprises 182 residues: Dirigent protein 5 (182 aa).

The signal sequence occupies residues 1-23 (MVGQMKSFLFLFVFLVLTKTVIS). Cysteine 35 and cysteine 181 are disulfide-bonded. 2 N-linked (GlcNAc...) asparagine glycosylation sites follow: asparagine 54 and asparagine 118.

The protein belongs to the plant dirigent protein family. In terms of assembly, homodimer. As to expression, confined to shoot meristem, vascular region of cotyledons and siliques abscission zone.

The protein localises to the secreted. It localises to the extracellular space. The protein resides in the apoplast. Its function is as follows. Dirigent proteins impart stereoselectivity on the phenoxy radical-coupling reaction, yielding optically active lignans from two molecules of coniferyl alcohol in the biosynthesis of lignans, flavonolignans, and alkaloids and thus plays a central role in plant secondary metabolism. Enantiocomplementary dirigent protein that mediates the laccase-catalyzed enantioselective oxidative phenol coupling of (E)-coniferyl alcohol to (-)-pinoresinol. In Arabidopsis thaliana (Mouse-ear cress), this protein is Dirigent protein 5 (DIR5).